We begin with the raw amino-acid sequence, 481 residues long: MTKKKTEKEKGINNGYITQVIGPVIDAVFSSGILPKIYNALEVQSKEGPIICEVQQLLGDNRVRAIAMSATDGLQRGVTVIDTQAPIAVPVGKATLGRIFNVLGQPVDNLSDSVGEDTLPIHRSAPAFTDLETKPAIFETGIKVVDLLAPYRRGGKIGLFGGAGVGKTVLIMELINNIAKAHGGVSVFGGVGERTREGNDLYMEMKESGVINETNLLESKVALVYGQMNEPPGARMRVGLTALTMAEYFRDINKQDVLLFIDNIFRFVQAGSEVSALLGRMPSAVGYQPTLGTEMGALQERITSTTQGSITSIQAVYVPADDLTDPAPATTFAHLDATTVLSRGLAAKGIYPAVDPLDSTSTMLQPLIVGDEHYKTAQLVKETLQRYKELQDIIAILGIDELSEEDRLVVDRARKIERFLSQPFFVAEVFTGSPGKYVDLENTIKGFNMILGGELDDLPEQAFYLVGDINEAISKAKTFKN.

An ATP-binding site is contributed by Gly161–Thr168.

Belongs to the ATPase alpha/beta chains family. F-type ATPases have 2 components, CF(1) - the catalytic core - and CF(0) - the membrane proton channel. CF(1) has five subunits: alpha(3), beta(3), gamma(1), delta(1), epsilon(1). CF(0) has four main subunits: a(1), b(1), b'(1) and c(9-12).

It localises to the plastid. The protein resides in the chloroplast thylakoid membrane. It carries out the reaction ATP + H2O + 4 H(+)(in) = ADP + phosphate + 5 H(+)(out). Functionally, produces ATP from ADP in the presence of a proton gradient across the membrane. The catalytic sites are hosted primarily by the beta subunits. The chain is ATP synthase subunit beta, chloroplastic from Pylaiella littoralis (Seaweed).